A 410-amino-acid chain; its full sequence is Peptidase T (410 aa).

His79 lines the Zn(2+) pocket. Asp81 is a catalytic residue. Asp142 lines the Zn(2+) pocket. The active-site Proton acceptor is the Glu176. Residues Glu177, Asp199, and His381 each contribute to the Zn(2+) site.

The protein belongs to the peptidase M20B family. Zn(2+) serves as cofactor.

It localises to the cytoplasm. The catalysed reaction is Release of the N-terminal residue from a tripeptide.. In terms of biological role, cleaves the N-terminal amino acid of tripeptides. This chain is Peptidase T, found in Bacillus mycoides (strain KBAB4) (Bacillus weihenstephanensis).